A 223-amino-acid chain; its full sequence is Large ribosomal subunit protein bL21 (223 aa).

A disordered region spans residues 110–149 (TALKSTTAEPKAADAPKAKAKAAPKAEKAAAPKAEKAPAK). Residues 133–147 (PKAEKAAAPKAEKAP) show a composition bias toward basic and acidic residues.

Belongs to the bacterial ribosomal protein bL21 family. As to quaternary structure, part of the 50S ribosomal subunit. Contacts protein L20.

In terms of biological role, this protein binds to 23S rRNA in the presence of protein L20. The polypeptide is Large ribosomal subunit protein bL21 (Maricaulis maris (strain MCS10) (Caulobacter maris)).